Reading from the N-terminus, the 449-residue chain is MITDQNSKPQQGELPTTHIDALTNSFSQFLRIEATSGAVLLLATVVALTLSNSPWSDGFRSLWETPIGIQIGAFQFLRSLRDLINDGLMTLFFFIVALEIKREVVLGELRNPRMVALSVVAAAGGMLVPMGLYLALQHGQPGQHGWGVVMPTDTAFVIGCLALLGSRVPPGLRVFLLSLAVVDDLAAILVVAVGYSRSIDWTALALGAVGLVIIRGMALLGVRNIRVYFLAGAIIWLAVNASGIHATIVGVILGLMTPTAGWVSDQRLGEILRKVLSYPPGDHWSGDTEDNRALQVAGIAVRETLSPVERLEAMLHPWVAFGVMPLFALANAGVPITIKGLINPVSLAVMAGFVLGKPIGVTAFAWLGVRTGVAIRPAGLTWGGLVGGALLTGIGFTMALFIAGQAFQDATLNAAKLGILAASVVSSVAGLTLLCALPRSDGTLDADFH.

Transmembrane regions (helical) follow at residues 32–52, 87–107, 114–134, 145–165, 174–194, 202–222, 233–253, 318–338, 347–367, 382–402, and 417–437; these read IEAT…TLSN, GLMT…VVLG, MVAL…GLYL, GWGV…ALLG, VFLL…VAVG, TALA…LLGV, AIIW…GVIL, WVAF…PITI, LAVM…FAWL, WGGL…ALFI, and LGIL…LCAL.

This sequence belongs to the NhaA Na(+)/H(+) (TC 2.A.33) antiporter family.

It localises to the cell inner membrane. The catalysed reaction is Na(+)(in) + 2 H(+)(out) = Na(+)(out) + 2 H(+)(in). Functionally, na(+)/H(+) antiporter that extrudes sodium in exchange for external protons. This is Na(+)/H(+) antiporter NhaA 2 from Acidiphilium cryptum (strain JF-5).